The sequence spans 600 residues: NADH-quinone oxidoreductase subunit C/D (600 aa).

The segment at 1–190 (MVNNMTDLTA…DPFELTKAKQ (190 aa)) is NADH dehydrogenase I subunit C. The NADH dehydrogenase I subunit D stretch occupies residues 214–600 (DFMFLNLGPN…IDFVMSDVDR (387 aa)).

The protein in the N-terminal section; belongs to the complex I 30 kDa subunit family. It in the C-terminal section; belongs to the complex I 49 kDa subunit family. In terms of assembly, NDH-1 is composed of 13 different subunits. Subunits NuoB, CD, E, F, and G constitute the peripheral sector of the complex.

The protein localises to the cell inner membrane. It carries out the reaction a quinone + NADH + 5 H(+)(in) = a quinol + NAD(+) + 4 H(+)(out). In terms of biological role, NDH-1 shuttles electrons from NADH, via FMN and iron-sulfur (Fe-S) centers, to quinones in the respiratory chain. The immediate electron acceptor for the enzyme in this species is believed to be ubiquinone. Couples the redox reaction to proton translocation (for every two electrons transferred, four hydrogen ions are translocated across the cytoplasmic membrane), and thus conserves the redox energy in a proton gradient. The sequence is that of NADH-quinone oxidoreductase subunit C/D from Salmonella paratyphi A (strain ATCC 9150 / SARB42).